Consider the following 129-residue polypeptide: Transcriptional activator protein (129 aa).

Residues 1–20 are disordered; sequence MRSSSPSQPPSIKRAHRQAK. A Nuclear localization signal motif is present at residues 13-28; that stretch reads KRAHRQAKKRAIRRRR. The segment at 33–50 is a zinc-finger region; it reads CGCSIYFHLGCAGHGFTH. The tract at residues 73-118 is disordered; that stretch reads LFQDTQSRGPTVYQNEGIPRTDTVQPQPEESVASPQSLPELPSLDD. 2 stretches are compositionally biased toward polar residues: residues 74 to 86 and 94 to 109; these read FQDT…TVYQ and DTVQ…SPQS. Phosphoserine; by host is present on S109. The interval 115–129 is transactivation; sequence SLDDVDDSFWINLFS.

This sequence belongs to the geminiviridae transcriptional activator protein family. In terms of assembly, monomer. Homodimer. Homooligomer. Self-interaction correlates with nuclear localization and efficient activation of transcription. Monomers suppress local silencing by interacting with and inactivating host adenosine kinase 2 (ADK2) in the cytoplasm. Interacts with and inhibits host SNF1 kinase. In terms of processing, phosphorylated at Ser-109 by A.thaliana KIN10.

It localises to the host nucleus. The protein resides in the host cytoplasm. Functionally, strong activator of the late viral genes promoters. Enhances the expression of the capsid protein and nuclear shuttle protein. Acts as a suppressor of RNA-mediated gene silencing, also known as post-transcriptional gene silencing (PTGS), a mechanism of plant viral defense that limits the accumulation of viral RNAs. Suppresses the host RNA silencing by inhibiting adenosine kinase 2 (ADK2), a kinase involved in a general methylation pathway. Also suppresses the host basal defense by interacting with and inhibiting SNF1 kinase, a key regulator of cell metabolism implicated in innate antiviral defense. Determines pathogenicity. The protein is Transcriptional activator protein of Nicotiana tabacum (Common tobacco).